An 823-amino-acid chain; its full sequence is Lon protease (823 aa).

Residues 22-217 enclose the Lon N-terminal domain; it reads LPLLPVRDVV…KVNEHLNKEH (196 aa). Residue 369–376 coordinates ATP; that stretch reads GPPGVGKT. Positions 605–786 constitute a Lon proteolytic domain; the sequence is KNEVGIVTGL…DDVLAVALET (182 aa). Residues S692 and K735 contribute to the active site. The tract at residues 788-823 is disordered; the sequence is PPPPPASEGKPAATVKAPPRRGIAAPRKGAMAGAKS.

Belongs to the peptidase S16 family. Homohexamer. Organized in a ring with a central cavity.

It is found in the cytoplasm. The enzyme catalyses Hydrolysis of proteins in presence of ATP.. Its function is as follows. ATP-dependent serine protease that mediates the selective degradation of mutant and abnormal proteins as well as certain short-lived regulatory proteins. Required for cellular homeostasis and for survival from DNA damage and developmental changes induced by stress. Degrades polypeptides processively to yield small peptide fragments that are 5 to 10 amino acids long. Binds to DNA in a double-stranded, site-specific manner. In Geobacter metallireducens (strain ATCC 53774 / DSM 7210 / GS-15), this protein is Lon protease.